A 152-amino-acid chain; its full sequence is CASP-like protein 5C1 (152 aa).

Over 1 to 12 (MVRTTASFGTSS) the chain is Cytoplasmic. Residues 13–33 (SFVLRLGQTLFSSASLLFMCF) form a helical membrane-spanning segment. The Extracellular portion of the chain corresponds to 34–44 (NDDEDFYAYTT). Residues 45–65 (FCYLVTVMGLVTPWSVTLALM) form a helical membrane-spanning segment. Over 66–80 (EAYSILVKKLPMQAT) the chain is Cytoplasmic. Residues 81–101 (VISVIVAGDFVLSFLSLGGAC) form a helical membrane-spanning segment. Residues 102 to 126 (STASVAVLLMDAGEKQCDRYKLSAT) are Extracellular-facing. The helical transmembrane segment at 127 to 147 (MAFLSSFLSFASTFFNFCLLP) threads the bilayer. The Cytoplasmic segment spans residues 148 to 152 (SLMSH).

The protein belongs to the Casparian strip membrane proteins (CASP) family. As to quaternary structure, homodimer and heterodimers.

It is found in the cell membrane. This is CASP-like protein 5C1 from Arabidopsis thaliana (Mouse-ear cress).